Reading from the N-terminus, the 676-residue chain is Methionine--tRNA ligase (676 aa).

Positions Pro-15 to His-25 match the 'HIGH' region motif. Residues Cys-146, Cys-149, Cys-159, and Cys-162 each contribute to the Zn(2+) site. A 'KMSKS' region motif is present at residues Lys-332–Ser-336. Position 335 (Lys-335) interacts with ATP. One can recognise a tRNA-binding domain in the interval Asp-575 to Lys-676.

Belongs to the class-I aminoacyl-tRNA synthetase family. MetG type 1 subfamily. In terms of assembly, homodimer. Zn(2+) is required as a cofactor.

It is found in the cytoplasm. The enzyme catalyses tRNA(Met) + L-methionine + ATP = L-methionyl-tRNA(Met) + AMP + diphosphate. Functionally, is required not only for elongation of protein synthesis but also for the initiation of all mRNA translation through initiator tRNA(fMet) aminoacylation. This is Methionine--tRNA ligase from Shewanella sp. (strain ANA-3).